The primary structure comprises 595 residues: Phosphomethylpyrimidine synthase (595 aa).

Basic and acidic residues predominate over residues 97 to 120; the sequence is GRDVRPEDNGFTKDDDPRAAREVF. Residues 97–134 are disordered; it reads GRDVRPEDNGFTKDDDPRAAREVFPRTSSHKPLRAKKG. Over residues 124–133 the composition is skewed to basic residues; the sequence is SSHKPLRAKK. Substrate contacts are provided by residues asparagine 202, methionine 231, tyrosine 260, histidine 296, 316-318, 357-360, and glutamate 396; these read SRG and DGLR. Histidine 400 is a binding site for Zn(2+). Substrate is bound at residue tyrosine 423. A Zn(2+)-binding site is contributed by histidine 464. [4Fe-4S] cluster is bound by residues cysteine 544, cysteine 547, and cysteine 552.

Belongs to the ThiC family. [4Fe-4S] cluster serves as cofactor.

The catalysed reaction is 5-amino-1-(5-phospho-beta-D-ribosyl)imidazole + S-adenosyl-L-methionine = 4-amino-2-methyl-5-(phosphooxymethyl)pyrimidine + CO + 5'-deoxyadenosine + formate + L-methionine + 3 H(+). It functions in the pathway cofactor biosynthesis; thiamine diphosphate biosynthesis. Its function is as follows. Catalyzes the synthesis of the hydroxymethylpyrimidine phosphate (HMP-P) moiety of thiamine from aminoimidazole ribotide (AIR) in a radical S-adenosyl-L-methionine (SAM)-dependent reaction. The chain is Phosphomethylpyrimidine synthase from Halalkalibacterium halodurans (strain ATCC BAA-125 / DSM 18197 / FERM 7344 / JCM 9153 / C-125) (Bacillus halodurans).